We begin with the raw amino-acid sequence, 1379 residues long: Vascular endothelial growth factor receptor 3 (1379 aa).

Positions 1–19 (MKRVCTLPLWLWLGIVSEA) are cleaved as a signal peptide. Residues 20 to 788 (DLVSSYSMTP…EGSDDKTNVE (769 aa)) are Extracellular-facing. Ig-like C2-type domains follow at residues 30–136 (PTLS…TAVS), 160–222 (KENT…IDNK), 240–335 (DIQL…TDVI), 340–421 (PFIN…KRIS), 430–566 (PRIH…FYVT), 569–684 (PDGF…KYIS), and 691–777 (PRLK…ASVS). Intrachain disulfides connect C51–C120 and C167–C215. Residues 73 to 93 (RRWNSQPQQRPVGAGNPEEDC) are disordered. Residues N113, N175, N260, and N308 are each glycosylated (N-linked (GlcNAc...) asparagine). An intrachain disulfide couples C261 to C319. Cystine bridges form between C453–C548, C474–C500, and C592–C666. N529, N541, N596, N608, N655, N696, and N703 each carry an N-linked (GlcNAc...) asparagine glycan. An intrachain disulfide couples C712 to C761. N771 carries N-linked (GlcNAc...) asparagine glycosylation. The helical transmembrane segment at 789–809 (IVILIGTGVIAVFFWILLIII) threads the bilayer. Residues 810-1379 (FCNIKRPAHA…LHASFFSEQY (570 aa)) are Cytoplasmic-facing. The region spanning 858–1185 (LRLGKVLGHG…DLVEILGNLL (328 aa)) is the Protein kinase domain. Residues 864 to 872 (LGHGAFGKV) and K892 contribute to the ATP site. Residue D1049 is the Proton acceptor of the active site. Phosphotyrosine; by autocatalysis occurs at positions 1075 and 1080. Positions 1196–1224 (YIPLNDSHSSEDDGFSQVPSSAQQNSDEE) are disordered. Residues Y1239, Y1240, Y1274, Y1342, and Y1346 each carry the phosphotyrosine; by autocatalysis modification. The disordered stretch occupies residues 1299 to 1379 (RHRKEGGFSS…LHASFFSEQY (81 aa)). Over residues 1332-1343 (YGSQVGGQTFYN) the composition is skewed to polar residues.

This sequence belongs to the protein kinase superfamily. Tyr protein kinase family. CSF-1/PDGF receptor subfamily. As to quaternary structure, interacts with VEGFC and VEGFD. Monomer in the absence of bound VEGFC or VEGFD. Homodimer in the presence of bound VEGFC or VEGFD. In terms of processing, autophosphorylated on tyrosine residues upon ligand binding. Autophosphorylation occurs in trans, i.e. one subunit of the dimeric receptor phosphorylates tyrosine residues on the other subunit.

It is found in the cell membrane. It localises to the cytoplasm. The protein resides in the nucleus. The enzyme catalyses L-tyrosyl-[protein] + ATP = O-phospho-L-tyrosyl-[protein] + ADP + H(+). Present in an inactive conformation in the absence of bound ligand. Binding of VEGFC or VEGFD leads to dimerization and activation by autophosphorylation on tyrosine residues. In terms of biological role, tyrosine-protein kinase that acts as a cell-surface receptor for VEGFC and VEGFD, and plays an essential role in lymphangiogenesis and in the development of the vascular network and the cardiovascular system during embryonic development. Promotes proliferation, survival and migration of endothelial cells, and regulates angiogenic sprouting. Mediates activation of the MAPK1/ERK2, MAPK3/ERK1 signaling pathway, of MAPK8 and the JUN signaling pathway, and of the AKT1 signaling pathway. This Coturnix coturnix (Common quail) protein is Vascular endothelial growth factor receptor 3 (FLT4).